A 342-amino-acid chain; its full sequence is MKIKVGILGASGYAGNELVRILLNHPKVEISYLGSSSSVGQNYQDLYPNTLLNLCFENKNLDELELDLLFLATPHEFSAKLLNENLLKKMKIIDLSADFRLKNPKDYELWYKFTHPNQELLQNAVYGLCELYKEEIKKASLVANPGCYTTCSILSLYPLFKEKIIDFSSVIIDAKSGVSGAGRSAKVENLFCEVNENIKAYNLALHRHTPEIEEHLSYAAKKKITLQFTPHLVSMQRGILISAYANLKEDLQEQDIRDIYTKYYQNNKFIRLLPPQSLPQTRWVKSSNFADINFSVDQRTKRVIVLGAIDNLIKGAAGQAVQNMNLMFDFDEDEGLKFFANL.

Residue cysteine 147 is part of the active site.

This sequence belongs to the NAGSA dehydrogenase family. Type 1 subfamily.

The protein localises to the cytoplasm. The catalysed reaction is N-acetyl-L-glutamate 5-semialdehyde + phosphate + NADP(+) = N-acetyl-L-glutamyl 5-phosphate + NADPH + H(+). It participates in amino-acid biosynthesis; L-arginine biosynthesis; N(2)-acetyl-L-ornithine from L-glutamate: step 3/4. Catalyzes the NADPH-dependent reduction of N-acetyl-5-glutamyl phosphate to yield N-acetyl-L-glutamate 5-semialdehyde. This chain is N-acetyl-gamma-glutamyl-phosphate reductase, found in Campylobacter jejuni subsp. jejuni serotype O:23/36 (strain 81-176).